Consider the following 337-residue polypeptide: Casein kinase I isoform alpha (337 aa).

Alanine 2 is subject to N-acetylalanine. Serine 4 carries the post-translational modification Phosphoserine. Lysine 8 is subject to N6-acetyllysine. Residues 17 to 285 (YKLVRKIGSG…YLRQLFRILF (269 aa)) form the Protein kinase domain. Residues 23–31 (IGSGSFGDI) and lysine 46 each bind ATP. The active-site Proton acceptor is the aspartate 136. A compositionally biased stretch (low complexity) spans 309–325 (AASSSGQGQQAQTPTGK). The segment at 309 to 337 (AASSSGQGQQAQTPTGKQTDKTKSNMKGF) is disordered.

Belongs to the protein kinase superfamily. CK1 Ser/Thr protein kinase family. Casein kinase I subfamily. As to quaternary structure, interacts with the Axin complex. Interacts with TUT1, leading to TUT1 phosphorylation. Interacts with FAM83A, FAM83B, FAM83C, FAM83D, FAM83E, FAM83F, FAM83G and FAM83H (via DUF1669). Interaction with FAM83H recruits CSNK1A1 to keratin filaments. Post-translationally, phosphorylated by MTOR in response to mitogenic stimulation, leading to its activation.

Its subcellular location is the cytoplasm. The protein localises to the cytoskeleton. It localises to the microtubule organizing center. It is found in the centrosome. The protein resides in the chromosome. Its subcellular location is the centromere. The protein localises to the kinetochore. It localises to the nucleus speckle. It is found in the cilium basal body. The protein resides in the spindle. It carries out the reaction L-seryl-[protein] + ATP = O-phospho-L-seryl-[protein] + ADP + H(+). It catalyses the reaction L-threonyl-[protein] + ATP = O-phospho-L-threonyl-[protein] + ADP + H(+). In terms of biological role, casein kinases are operationally defined by their preferential utilization of acidic proteins such as caseins as substrates. Can phosphorylate a large number of proteins. Participates in Wnt signaling. Phosphorylates CTNNB1 at 'Ser-45'. May phosphorylate PER1 and PER2. May play a role in segregating chromosomes during mitosis. May play a role in keratin cytoskeleton disassembly and thereby, it may regulate epithelial cell migration. Acts as a positive regulator of mTORC1 and mTORC2 signaling in response to nutrients by mediating phosphorylation of DEPTOR inhibitor. Acts as an inhibitor of NLRP3 inflammasome assembly by mediating phosphorylation of NLRP3. The polypeptide is Casein kinase I isoform alpha (Csnk1a1) (Mus musculus (Mouse)).